The sequence spans 174 residues: MARKNQKAPWEPEEEIIWVSKTEMKTDMDALQKLGEELVDLKPSVLDKFPLSEDLAQAIKDAQRFKNEAKRRQLQYIGKVMRSVDPEPIQAALDKIRNKHSQATVELHKLEQLRDRVVAEGDAAISDVMEMYPEADRQRLRQLARQANKEKAANKPAKSSREIFQILKELKLGD.

It belongs to the DarP family.

It is found in the cytoplasm. Member of a network of 50S ribosomal subunit biogenesis factors which assembles along the 30S-50S interface, preventing incorrect 23S rRNA structures from forming. Promotes peptidyl transferase center (PTC) maturation. The protein is Dual-action ribosomal maturation protein DarP of Vibrio atlanticus (strain LGP32) (Vibrio splendidus (strain Mel32)).